Reading from the N-terminus, the 83-residue chain is Phytosulfokines 4 (83 aa).

Residues 1–28 (MAARTVAVAAALAVLLIFAASSATVAMA) form the signal peptide. The propeptide occupies 29–74 (GRPTPTTSLDEEAAQAAAQSEIGGGCKEGEGEEECLARRTLTAHTD). Tyr-75 and Tyr-77 each carry sulfotyrosine. A propeptide spanning residues 80-83 (QHHN) is cleaved from the precursor.

The protein belongs to the phytosulfokine family. Post-translationally, sulfation is important for activity and for the binding to a putative membrane receptor. PSK-alpha is produced by endopeptidase digestion. PSK-beta is produced from PSK-alpha by exopeptidase digestion.

It is found in the secreted. Promotes plant cell differentiation, organogenesis and somatic embryogenesis as well as cell proliferation. This Oryza sativa subsp. japonica (Rice) protein is Phytosulfokines 4 (PSK4).